The following is a 461-amino-acid chain: Ribulose bisphosphate carboxylase (461 aa).

Substrate is bound at residue N112. The active-site Proton acceptor is the K167. K169 is a binding site for substrate. Mg(2+) is bound by residues K192, D194, and E195. At K192 the chain carries N6-carboxylysine. H288 acts as the Proton acceptor in catalysis. 3 residues coordinate substrate: R289, H322, and S369.

The protein belongs to the RuBisCO large chain family. Type II subfamily. As to quaternary structure, homodimer. It depends on Mg(2+) as a cofactor.

The enzyme catalyses 2 (2R)-3-phosphoglycerate + 2 H(+) = D-ribulose 1,5-bisphosphate + CO2 + H2O. It catalyses the reaction D-ribulose 1,5-bisphosphate + O2 = 2-phosphoglycolate + (2R)-3-phosphoglycerate + 2 H(+). In terms of biological role, ruBisCO catalyzes two reactions: the carboxylation of D-ribulose 1,5-bisphosphate, the primary event in carbon dioxide fixation, as well as the oxidative fragmentation of the pentose substrate. Both reactions occur simultaneously and in competition at the same active site. The sequence is that of Ribulose bisphosphate carboxylase from Rhodopseudomonas palustris (strain BisB18).